A 110-amino-acid chain; its full sequence is uncharacterized protein (110 aa).

Its subcellular location is the plastid. The protein resides in the chloroplast. This is an uncharacterized protein from Auxenochlorella pyrenoidosa (Freshwater green alga).